The primary structure comprises 436 residues: Chromosomal replication initiator protein DnaA (436 aa).

The domain I, interacts with DnaA modulators stretch occupies residues 1-69 (MLADEVIELL…ANIFEVKTGI (69 aa)). The segment at 69–99 (IKPVISITTQKNRVSIKAKDIDVKQIRTQSS) is domain II. Positions 100–314 (LLNPSYTFES…SAIININAFA (215 aa)) are domain III, AAA+ region. Positions 144, 146, 147, and 148 each coordinate ATP. The segment at 315–436 (NIMRQEITLE…ELKNKITSKE (122 aa)) is domain IV, binds dsDNA.

This sequence belongs to the DnaA family. In terms of assembly, oligomerizes as a right-handed, spiral filament on DNA at oriC.

Its subcellular location is the cytoplasm. Plays an essential role in the initiation and regulation of chromosomal replication. ATP-DnaA binds to the origin of replication (oriC) to initiate formation of the DNA replication initiation complex once per cell cycle. Binds the DnaA box (a 9 base pair repeat at the origin) and separates the double-stranded (ds)DNA. Forms a right-handed helical filament on oriC DNA; dsDNA binds to the exterior of the filament while single-stranded (ss)DNA is stabiized in the filament's interior. The ATP-DnaA-oriC complex binds and stabilizes one strand of the AT-rich DNA unwinding element (DUE), permitting loading of DNA polymerase. After initiation quickly degrades to an ADP-DnaA complex that is not apt for DNA replication. Binds acidic phospholipids. The sequence is that of Chromosomal replication initiator protein DnaA from Campylobacter fetus subsp. fetus (strain 82-40).